Here is a 1039-residue protein sequence, read N- to C-terminus: MAAAPFLKHWRTTFERVEKFVSPIYFTDCNLRGRLFGDSCSVTLSSFLTPERLPYEKAVQQNFSPAQVGDSFGPTWWTCWFRVELVIPEVWVGQEVHLCWESDGESLVWRDGEPVQGLTKEGEKTSYVLSERLRASDPRSLTLYVEVACNGLLGAGKGSMIAAPDPEKMFQLSQAKLAVFHRDVHSLLVDLELLLGVAKGLGEDSQRSFQALHTANQMVNICDPAQPETYPAAKALASKFFGQHGGESQHTIHAMGHCHIDTAWLWPFKETVRKCARSWSTAVTLMEQNTDFIFACSQAQQLEWVKSQYPGLHARLQEFACRGQFVPVGGTWVEMDGNLPSGEAMVRQFLQGQNFFLQEFGKMCSEFWLPDTFGYSAQLPQIMQGCGIKRFLTQKLSWNLVNSFPHHTFFWEGLDGSRVLVHFPPGDSYGMQGSVEEVLKTVTNNRDKGRTNHSGFLFGFGDGGGGPTQTMLDRLKRLSNTDGLPRVQLSSPGQLFTALERDSGQLCTWVGELFLELHNGTYTTHAQLKKGNRECEQILHDVEVLSSLALARSAQFLYPAAQLQHLWRLLLLNQFHDVVTGSCIQLVAEDAMNYYEDIRSHGNPLLSAAAAALCAGEPGPKGLLIINTLPWKRTEVLALPKPCGAHSLALVTVPSIGYAPAPTPTSLQPLLPQQPVFVMQETDGSVTLDNGIIRVRLDPTGCLTSLVLVASGREAIAEGALGNQFVLFDDVPLYWDAWDVMDYHLETRKPVLGQAGTLAVGTEGGLRGSAWFLLQISPNSRLSQEVVLDVGCPYVRFHTEVHWHEAHKFLKVEFPARIRSPQATYEIQFGHLQRPTHNNTSWDWARYEVWAHRWIDLSECDFGLALLNNCKYGASVRGNVLSLSLLRAPKAPDATADMGRHEFTYALMPHKGSFQEAGVIHAAYNLNFPLLALPAPGPAPDTTWSAFSVSSPAVVLETIKQAERCHQHRTLVLRLYEAHGSHVDCWLHTSLPVQEATLCDLLEQRDPTGHLSLQDNRLKLTFSPFQVRSLLLVLQSPPN.

Co(2+)-binding residues include histidine 259, aspartate 261, aspartate 371, and histidine 576. Aspartate 371 serves as the catalytic Nucleophile.

The protein belongs to the glycosyl hydrolase 38 family. The cofactor is Co(2+). In terms of tissue distribution, expressed in kidney and liver (at protein level). Widely expressed, with highest levels in lung, ovary and testis. Also detected at lower levels in heart, brain, liver, spleen, kidney and thymus.

It localises to the cytoplasm. The enzyme catalyses Hydrolysis of terminal, non-reducing alpha-D-mannose residues in alpha-D-mannosides.. With respect to regulation, inhibited by 1,4-dideoxy-1,4-imino-d-mannitol (DIM) and EDTA. Its function is as follows. Cleaves alpha 1,2-, alpha 1,3-, and alpha 1,6-linked mannose residues from glycoproteins. Involved in the degradation of free oligosaccharides in the cytoplasm. The polypeptide is Alpha-mannosidase 2C1 (Mus musculus (Mouse)).